A 386-amino-acid polypeptide reads, in one-letter code: Patatin-17 (386 aa).

The signal sequence occupies residues 1–23; that stretch reads MATTKSFLILIFMILATTSSTFA. The PNPLA domain maps to 32–229; sequence LSIDGGGIRG…TVADPALLSI (198 aa). A GXGXXG motif is present at residues 36 to 41; it reads GGGIRG. A GXSXG motif is present at residues 75–79; that stretch reads GTSTG. Residue Ser77 is the Nucleophile of the active site. Asn202 is a glycosylation site (N-linked (GlcNAc...) asparagine). Asp215 (proton acceptor) is an active-site residue. A DGA/G motif is present at residues 215 to 217; sequence DGA. Residues 321–384 are a coiled coil; that stretch reads ENALTGTTTE…DRKKLRANKA (64 aa).

This sequence belongs to the patatin family.

Its subcellular location is the vacuole. Functionally, non-specific lipolytic acyl hydrolase (LAH), an activity which is thought to be involved in the response of tubers to pathogens. Catalyzes the non-specific hydrolysis of phospholipids, glycolipids, sulfolipids, and mono- and diacylglycerols includng p-nitrophenyl caprate. Confers resistance to southern corn rootworm (SCRW). The chain is Patatin-17 from Solanum cardiophyllum (Heartleaf nightshade).